The sequence spans 84 residues: Neurotoxin BmK-M10 (84 aa).

The signal sequence occupies residues Met-1 to Ser-19. The LCN-type CS-alpha/beta domain maps to Arg-21–Gln-83. 4 disulfides stabilise this stretch: Cys-31–Cys-82, Cys-35–Cys-55, Cys-41–Cys-65, and Cys-45–Cys-67. A propeptide (removed by a carboxypeptidase) is located at residue Arg-84.

Expressed by the venom gland.

It is found in the secreted. In terms of biological role, binds to voltage-dependent sodium channels (Nav) and voltage-dependent delayed rectifier potassium channels and inhibits the inactivation of the activated channels, thereby blocking neuronal transmission. Administration to mice at a dosage of 0.8 mg/kg produces an analgesic effect. This is Neurotoxin BmK-M10 from Olivierus martensii (Manchurian scorpion).